Here is a 121-residue protein sequence, read N- to C-terminus: uncharacterized protein (121 aa).

The disordered stretch occupies residues 1–121 (MGQVLSICSS…QQEREQIKWD (121 aa)). Glycine 2 carries the N-myristoyl glycine lipid modification. A lipid anchor (S-palmitoyl cysteine) is attached at cysteine 8. Composition is skewed to basic and acidic residues over residues 11–23 (KSKE…EKPT), 73–83 (AAEKRNIEKKK), 90–105 (RQLE…EHLQ), and 112–121 (QQEREQIKWD).

It to yeast YGL108C. Myristoylated. Post-translationally, the N-myristoylated protein is further palmitoylated.

It is found in the cytoplasm. The protein resides in the cytosol. This is an uncharacterized protein from Schizosaccharomyces pombe (strain 972 / ATCC 24843) (Fission yeast).